The sequence spans 380 residues: 3-dehydroquinate synthase (380 aa).

NAD(+) contacts are provided by residues 100-104 (GAASD), 124-125 (TT), K137, and K146. Residues E179, H251, and H267 each coordinate Zn(2+). A disordered region spans residues 320 to 343 (YMQRDKKNMQSNDTDSDKDSREMP).

The protein belongs to the sugar phosphate cyclases superfamily. Dehydroquinate synthase family. NAD(+) is required as a cofactor. Co(2+) serves as cofactor. It depends on Zn(2+) as a cofactor.

The protein resides in the cytoplasm. It carries out the reaction 7-phospho-2-dehydro-3-deoxy-D-arabino-heptonate = 3-dehydroquinate + phosphate. It functions in the pathway metabolic intermediate biosynthesis; chorismate biosynthesis; chorismate from D-erythrose 4-phosphate and phosphoenolpyruvate: step 2/7. Catalyzes the conversion of 3-deoxy-D-arabino-heptulosonate 7-phosphate (DAHP) to dehydroquinate (DHQ). This is 3-dehydroquinate synthase from Tropheryma whipplei (strain Twist) (Whipple's bacillus).